We begin with the raw amino-acid sequence, 318 residues long: tRNA pseudouridine synthase B (318 aa).

Residue D47 is the Nucleophile of the active site.

It belongs to the pseudouridine synthase TruB family. Type 1 subfamily.

It catalyses the reaction uridine(55) in tRNA = pseudouridine(55) in tRNA. Responsible for synthesis of pseudouridine from uracil-55 in the psi GC loop of transfer RNAs. This is tRNA pseudouridine synthase B from Aliivibrio salmonicida (strain LFI1238) (Vibrio salmonicida (strain LFI1238)).